The following is an 85-amino-acid chain: Small ribosomal subunit protein uS17 (85 aa).

Belongs to the universal ribosomal protein uS17 family. Part of the 30S ribosomal subunit.

In terms of biological role, one of the primary rRNA binding proteins, it binds specifically to the 5'-end of 16S ribosomal RNA. The sequence is that of Small ribosomal subunit protein uS17 from Blochmanniella floridana.